The primary structure comprises 154 residues: Putative peroxiredoxin MT1643 (154 aa).

Positions 1–153 constitute a Thioredoxin domain; it reads MKTGDTVADF…ALATLRAIRS (153 aa). Cys44 serves as the catalytic Cysteine sulfenic acid (-SOH) intermediate. The cysteines at positions 44 and 49 are disulfide-linked.

This sequence belongs to the peroxiredoxin family. BCP/PrxQ subfamily. In terms of assembly, monomer.

It catalyses the reaction a hydroperoxide + [thioredoxin]-dithiol = an alcohol + [thioredoxin]-disulfide + H2O. In terms of biological role, thiol-specific peroxidase that catalyzes the reduction of hydrogen peroxide and organic hydroperoxides to water and alcohols, respectively. Plays a role in cell protection against oxidative stress by detoxifying peroxides and as sensor of hydrogen peroxide-mediated signaling events. The chain is Putative peroxiredoxin MT1643 (bcpB) from Mycobacterium tuberculosis (strain CDC 1551 / Oshkosh).